The sequence spans 266 residues: 4-hydroxy-tetrahydrodipicolinate reductase (266 aa).

Position 10-15 (10-15 (GPRGRM)) interacts with NAD(+). K38 lines the NADP(+) pocket. NAD(+) contacts are provided by residues 99 to 101 (GTT) and 125 to 128 (APNF). Catalysis depends on H155, which acts as the Proton donor/acceptor. Residue H156 coordinates (S)-2,3,4,5-tetrahydrodipicolinate. K159 (proton donor) is an active-site residue. Residue 165–166 (GT) participates in (S)-2,3,4,5-tetrahydrodipicolinate binding.

Belongs to the DapB family.

The protein resides in the cytoplasm. The catalysed reaction is (S)-2,3,4,5-tetrahydrodipicolinate + NAD(+) + H2O = (2S,4S)-4-hydroxy-2,3,4,5-tetrahydrodipicolinate + NADH + H(+). It carries out the reaction (S)-2,3,4,5-tetrahydrodipicolinate + NADP(+) + H2O = (2S,4S)-4-hydroxy-2,3,4,5-tetrahydrodipicolinate + NADPH + H(+). The protein operates within amino-acid biosynthesis; L-lysine biosynthesis via DAP pathway; (S)-tetrahydrodipicolinate from L-aspartate: step 4/4. Catalyzes the conversion of 4-hydroxy-tetrahydrodipicolinate (HTPA) to tetrahydrodipicolinate. The polypeptide is 4-hydroxy-tetrahydrodipicolinate reductase (Bacillus cereus (strain Q1)).